Here is a 183-residue protein sequence, read N- to C-terminus: uncharacterized protein (183 aa).

Residues 105 to 149 are compositionally biased toward low complexity; it reads YNTNNSNTNTNYNNNNNNNNNNNNNNNNNNNKNNNNNNNNNNSNS. Positions 105–151 are disordered; sequence YNTNNSNTNTNYNNNNNNNNNNNNNNNNNNNKNNNNNNNNNNSNSKI.

This is an uncharacterized protein from Dictyostelium discoideum (Social amoeba).